The following is a 242-amino-acid chain: MIHIGQLDLEKKAAVVAVILEKSLEISRKAAKMGADLLEIRLDLLGIRDLETAAETIRKVKSETGLPVILTNRSITEGGKWEGKEADRIELLTNLISLKDGPDAVDIELSAGREARDQVIKAAKAHGKTVIVSSHDFSRTPAFQEMKTILEEAFLAGADIAKLAVMPQSRRDVLNLLRVALDAREAGNAVCTIAMGRLGKHTRVIAPFYGSVLTYAAVNSEVSAAPGQFQVDEVKKILELLE.

3-dehydroquinate-binding positions include E39–R41 and R73. The Proton donor/acceptor role is filled by H135. K162 acts as the Schiff-base intermediate with substrate in catalysis. 3-dehydroquinate is bound by residues R203 and Q228.

This sequence belongs to the type-I 3-dehydroquinase family. As to quaternary structure, homodimer.

The catalysed reaction is 3-dehydroquinate = 3-dehydroshikimate + H2O. Its pathway is metabolic intermediate biosynthesis; chorismate biosynthesis; chorismate from D-erythrose 4-phosphate and phosphoenolpyruvate: step 3/7. In terms of biological role, involved in the third step of the chorismate pathway, which leads to the biosynthesis of aromatic amino acids. Catalyzes the cis-dehydration of 3-dehydroquinate (DHQ) and introduces the first double bond of the aromatic ring to yield 3-dehydroshikimate. The polypeptide is 3-dehydroquinate dehydratase (Methanosarcina barkeri (strain Fusaro / DSM 804)).